Here is a 211-residue protein sequence, read N- to C-terminus: Dephospho-CoA kinase (211 aa).

The region spanning 2 to 204 is the DPCK domain; that stretch reads IIGLTGSIGM…SGVRRWRRGK (203 aa). 10 to 15 is a binding site for ATP; the sequence is GMGKST.

This sequence belongs to the CoaE family.

It is found in the cytoplasm. The enzyme catalyses 3'-dephospho-CoA + ATP = ADP + CoA + H(+). It participates in cofactor biosynthesis; coenzyme A biosynthesis; CoA from (R)-pantothenate: step 5/5. Catalyzes the phosphorylation of the 3'-hydroxyl group of dephosphocoenzyme A to form coenzyme A. In Rhodospirillum rubrum (strain ATCC 11170 / ATH 1.1.1 / DSM 467 / LMG 4362 / NCIMB 8255 / S1), this protein is Dephospho-CoA kinase.